The sequence spans 441 residues: Gluconate 2-dehydrogenase cytochrome c subunit (441 aa).

The first 19 residues, 1–19 (MMKSILALVLGTLSFAALA), serve as a signal peptide directing secretion. Cytochrome c domains follow at residues 26–129 (ALVK…MHGV), 173–289 (PVLA…KSLG), and 312–403 (DDSQ…RGSW). Heme c contacts are provided by Cys40, Cys43, His44, Cys188, Cys191, His192, Cys325, Cys328, and His329.

Heterotrimer. FAD serves as cofactor. In terms of processing, binds 3 heme c groupd covalently per subunit.

It localises to the cell membrane. The catalysed reaction is D-gluconate + A = 2-dehydro-D-gluconate + AH2. In terms of biological role, part of the heterotrimer that catalyzes the conversion of D-gluconate to 2-dehydro-D-gluconate. This is Gluconate 2-dehydrogenase cytochrome c subunit from Pantoea cypripedii (Pectobacterium cypripedii).